The following is a 495-amino-acid chain: Trigger factor (495 aa).

In terms of domain architecture, PPIase FKBP-type spans 169-254; the sequence is GDRVTIDYLG…VKEVAAPGEV (86 aa). The segment at 439-495 is disordered; it reads ALLADDESEDKPAAKKAAPKKKAAKAEATEAAAEGEEAAVPKKKAAPKKKAAEDSAE.

Belongs to the FKBP-type PPIase family. Tig subfamily.

It localises to the cytoplasm. It catalyses the reaction [protein]-peptidylproline (omega=180) = [protein]-peptidylproline (omega=0). In terms of biological role, involved in protein export. Acts as a chaperone by maintaining the newly synthesized protein in an open conformation. Functions as a peptidyl-prolyl cis-trans isomerase. In Rhizobium rhizogenes (strain K84 / ATCC BAA-868) (Agrobacterium radiobacter), this protein is Trigger factor.